Consider the following 64-residue polypeptide: Large ribosomal subunit protein eL37 (64 aa).

Residues cysteine 20, cysteine 23, cysteine 35, and cysteine 38 each contribute to the Zn(2+) site. Residues 20-38 form a C4-type zinc finger; that stretch reads CRRCGRRAFHVRKKVCAAC.

It belongs to the eukaryotic ribosomal protein eL37 family. The cofactor is Zn(2+).

Its function is as follows. Binds to the 23S rRNA. The chain is Large ribosomal subunit protein eL37 from Methanococcus maripaludis (strain DSM 14266 / JCM 13030 / NBRC 101832 / S2 / LL).